The sequence spans 488 residues: MNVLNEKSLTVRGKDRYKSGVMSYKKMGYWEPDYTPKDTDIICLFRVTPQDGVDPIEAAAAVAGESSTATWTVVWTDRLTAAEKYRAKCYRVDPVPGAEGQYFAYIAYDLDLFESGSISNLTASVIGNVFGFKPLKALRLEDMRLPVAYVKTFKGPPTGIVVERERLDKFGRPLLGATVKPKLGLSGRNYGRVVYEALKGGLDFTKDDENINSQPFMHWRERFLYCMEAVNRAQAATGEVKGSYLNVTAATMEDMYERAEFAKELGSVVVMIDLVIGYTAIQSMSNWARKNDMILHLHRAGHSTYTRQRNHGVSFRVISKWMRLAGVDHIHAGTVVGKLEGDPLTTRGYYDICREEHNPMQLEHGIFFDQNWASLNKMMPVASGGIHAGQMHQLIQHLGEDVVLQFGGGTIGHPMGIQAGAIANRVALEAMILARNEGRDYVSEGPDILAKAAASCTPLKQALEVWKDVTFNYQSTDAPDYVTTPAVA.

Substrate contacts are provided by N128 and T178. K180 (proton acceptor) is an active-site residue. K182 provides a ligand contact to substrate. 3 residues coordinate Mg(2+): K206, D208, and E209. K206 is modified (N6-carboxylysine). H298 serves as the catalytic Proton acceptor. Positions 299, 331, and 383 each coordinate substrate.

The protein belongs to the RuBisCO large chain family. Type I subfamily. In terms of assembly, heterohexadecamer of 8 large chains and 8 small chains. Mg(2+) serves as cofactor.

It carries out the reaction 2 (2R)-3-phosphoglycerate + 2 H(+) = D-ribulose 1,5-bisphosphate + CO2 + H2O. The catalysed reaction is D-ribulose 1,5-bisphosphate + O2 = 2-phosphoglycolate + (2R)-3-phosphoglycerate + 2 H(+). Its function is as follows. RuBisCO catalyzes two reactions: the carboxylation of D-ribulose 1,5-bisphosphate, the primary event in carbon dioxide fixation, as well as the oxidative fragmentation of the pentose substrate. Both reactions occur simultaneously and in competition at the same active site. In Nitrobacter hamburgensis (strain DSM 10229 / NCIMB 13809 / X14), this protein is Ribulose bisphosphate carboxylase large chain 1.